Consider the following 459-residue polypeptide: Argininosuccinate lyase (459 aa).

Residues 440 to 459 (DEKKLEELRQNENRDNVYNP) form a disordered region.

It belongs to the lyase 1 family. Argininosuccinate lyase subfamily.

Its subcellular location is the cytoplasm. It carries out the reaction 2-(N(omega)-L-arginino)succinate = fumarate + L-arginine. Its pathway is amino-acid biosynthesis; L-arginine biosynthesis; L-arginine from L-ornithine and carbamoyl phosphate: step 3/3. The polypeptide is Argininosuccinate lyase (Pyrococcus furiosus (strain ATCC 43587 / DSM 3638 / JCM 8422 / Vc1)).